Reading from the N-terminus, the 852-residue chain is MFFACYCALRTNVKKYRYQDEDGPHDHSLPRLTHEVRGPELVHVSEKNLSQIENVHGYVLQSHISPLKASPAPIIVNTDTLDTIPYVNGTEIEYEFEEITLERGNSGLGFSIAGGTDNPHIGDDPGIFITKIIPGGAAAEDGRLRVNDCILRVNEVDVSEVSHSKAVEALKEAGSIVRLYVRRRRPILETVVEIKLFKGPKGLGFSIAGGVGNQHIPGDNSIYVTKIIDGGAAQKDGRLQVGDRLLMVNNYSLEEVTHEEAVAILKNTSDVVYLKVGKPTTIYMTDPYGPPDITHSYSPPMENHLLSGNNGTLEYKTSLPPISPGRYSPIPKHMLVEDDYTRPPEPVYSTVNKLCDKPASPRHYSPVECDKSFLLSTPYPHYHLGLLPDSDMTSHSQHSTATRQPSVTLQRAISLEGEPRKVVLHKGSTGLGFNIVGGEDGEGIFVSFILAGGPADLSGELQRGDQILSVNGIDLRGASHEQAAAALKGAGQTVTIIAQYQPEDYARFEAKIHDLREQMMNHSMSSGSGSLRTNQKRSLYVRAMFDYDKSKDSGLPSQGLSFKYGDILHVINASDDEWWQARRVILDGDSEEMGVIPSKRRVERKERARLKTVKFNAKPGVIDSKGDIPGLGDDGYGTKTLRGQEDLILSYEPVTRQEINYTRPVIILGPMKDRINDDLISEFPDKFGSCVPHTTRPKRDYEVDGRDYHFVISREQMEKDIQEHKFIEAGQYNDNLYGTSVQSVRFVAERGKHCILDVSGNAIKRLQVAQLYPIAIFIKPKSLEPLMEMNKRLTEEQAKKTYDRAIKLEQEFGEYFTAIVQGDTLEDIYNQCKLVIEEQSGPFIWIPSKEKL.

2 S-palmitoyl cysteine lipidation sites follow: Cys-5 and Cys-7. Phosphoserine is present on Ser-28. Phosphotyrosine is present on Tyr-58. Ser-65 is modified (phosphoserine). PDZ domains are found at residues 98–184 and 193–279; these read EITL…VRRR and EIKL…VGKP. 6 positions are modified to phosphoserine: Ser-307, Ser-328, Ser-360, Ser-365, Ser-406, and Ser-414. Positions 421–501 constitute a PDZ 3 domain; that stretch reads KVVLHKGSTG…QTVTIIAQYQ (81 aa). Tyr-505 carries the post-translational modification Phosphotyrosine. Ser-528, Ser-530, and Ser-553 each carry phosphoserine. In terms of domain architecture, SH3 spans 536-606; it reads KRSLYVRAMF…PSKRRVERKE (71 aa). Residues 662-837 form the Guanylate kinase-like domain; it reads TRPVIILGPM…IYNQCKLVIE (176 aa). A phosphotyrosine mark is found at Tyr-732 and Tyr-737.

Belongs to the MAGUK family. Interacts through its PDZ domains with NETO1. Interacts with NOS1/nNOS through second PDZ domain. Interacts with KCNJ2/Kir2.1 (via C-terminus) through one of its PDZ domains. Interacts with KCNJ4. Interacts with FRMPD4 (via C-terminus). Interacts with LRFN1. Interacts with LRFN2 and LRFN4. Interacts with FASLG. Interacts with ADAM22. Interacts with DGKI (via PDZ-binding motif). Palmitoylation of isoform 1 and isoform 2 is not required for targeting to postsynaptic density. In terms of tissue distribution, detected in juxtaparanodal zones in the central nervous system and at nerve terminal plexuses of basket cells in the cerebellum (at protein level). Brain. High levels in cerebellar Purkinje cells. Expressed in pyramidal cells of the Ammons's horn and granular cells of the dentate gyrus in the hippocampus as well as cerebral cortex and striatum. High levels in dorsal horn of spinal cord.

It localises to the cell membrane. The protein localises to the postsynaptic density. It is found in the synapse. Its subcellular location is the cell projection. The protein resides in the axon. It localises to the membrane. The protein localises to the perikaryon. Its function is as follows. Required for perception of chronic pain through NMDA receptor signaling. Regulates surface expression of NMDA receptors in dorsal horn neurons of the spinal cord. Interacts with the cytoplasmic tail of NMDA receptor subunits as well as inward rectifying potassium channels. Involved in regulation of synaptic stability at cholinergic synapses. Part of the postsynaptic protein scaffold of excitatory synapses. The polypeptide is Disks large homolog 2 (Dlg2) (Rattus norvegicus (Rat)).